Here is a 317-residue protein sequence, read N- to C-terminus: Apolipoprotein E (317 aa).

The first 18 residues, 1-18 (MKVLWAALLVTFLAGCQA), serve as a signal peptide directing secretion. 8 consecutive repeat copies span residues 80–101 (ALMDETMKELKAYKSELEEQLT), 102–123 (PVAEETRARLSKELQAAQARLG), 124–145 (ADMEDVRGRLVQYRGEVQAMLG), 146–167 (QSTEELRARLASHLRKLRKRLL), 168–189 (RDADDLQKRLAVYQAGAREGAE), 190–211 (RGVSAIRERLGPLVEQGRVRAA), 212–233 (TVGSLAGQPLQERAQAWGERLR), and 234–255 (ARMEEMGSRTRDRLDEVKEQVA). The interval 80–255 (ALMDETMKEL…RLDEVKEQVA (176 aa)) is 8 X 22 AA approximate tandem repeats. Methionine sulfoxide is present on methionine 143. Serine 147 carries the post-translational modification Phosphoserine. Residues 158-168 (HLRKLRKRLLR) form an LDL and other lipoprotein receptors binding region. 162–165 (LRKR) contacts heparin. Positions 210–290 (AATVGSLAGQ…SWFEPLVEDM (81 aa)) are lipid-binding and lipoprotein association. Position 229–236 (229–236 (GERLRARM)) interacts with heparin. The homooligomerization stretch occupies residues 266–317 (QQIRLQAEAFQARLKSWFEPLVEDMQRQWAGLVEKVQAAMGTSAAPVPSDNH). Residues 278–290 (RLKSWFEPLVEDM) form a specificity for association with VLDL region.

The protein belongs to the apolipoprotein A1/A4/E family. As to quaternary structure, homotetramer. May interact with ABCA1; functionally associated with ABCA1 in the biogenesis of HDLs. May interact with APP/A4 amyloid-beta peptide; the interaction is extremely stable in vitro but its physiological significance is unclear. May interact with MAPT. May interact with MAP2. In the cerebrospinal fluid, interacts with secreted SORL1. Interacts with PMEL; this allows the loading of PMEL luminal fragment on ILVs to induce fibril nucleation. APOE exists as multiple glycosylated and sialylated glycoforms within cells and in plasma. The extent of glycosylation and sialylation are tissue and context specific. Post-translationally, glycated in plasma VLDL. In terms of processing, phosphorylated by FAM20C in the extracellular medium.

It is found in the secreted. It localises to the extracellular space. The protein resides in the extracellular matrix. The protein localises to the extracellular vesicle. Its subcellular location is the endosome. It is found in the multivesicular body. In terms of biological role, APOE is an apolipoprotein, a protein associating with lipid particles, that mainly functions in lipoprotein-mediated lipid transport between organs via the plasma and interstitial fluids. APOE is a core component of plasma lipoproteins and is involved in their production, conversion and clearance. Apolipoproteins are amphipathic molecules that interact both with lipids of the lipoprotein particle core and the aqueous environment of the plasma. As such, APOE associates with chylomicrons, chylomicron remnants, very low density lipoproteins (VLDL) and intermediate density lipoproteins (IDL) but shows a preferential binding to high-density lipoproteins (HDL). It also binds a wide range of cellular receptors including the LDL receptor/LDLR, the LDL receptor-related proteins LRP1, LRP2 and LRP8 and the very low-density lipoprotein receptor/VLDLR that mediate the cellular uptake of the APOE-containing lipoprotein particles. Finally, APOE also has a heparin-binding activity and binds heparan-sulfate proteoglycans on the surface of cells, a property that supports the capture and the receptor-mediated uptake of APOE-containing lipoproteins by cells. A main function of APOE is to mediate lipoprotein clearance through the uptake of chylomicrons, VLDLs, and HDLs by hepatocytes. APOE is also involved in the biosynthesis by the liver of VLDLs as well as their uptake by peripheral tissues ensuring the delivery of triglycerides and energy storage in muscle, heart and adipose tissues. By participating in the lipoprotein-mediated distribution of lipids among tissues, APOE plays a critical role in plasma and tissues lipid homeostasis. APOE is also involved in two steps of reverse cholesterol transport, the HDLs-mediated transport of cholesterol from peripheral tissues to the liver, and thereby plays an important role in cholesterol homeostasis. First, it is functionally associated with ABCA1 in the biogenesis of HDLs in tissues. Second, it is enriched in circulating HDLs and mediates their uptake by hepatocytes. APOE also plays an important role in lipid transport in the central nervous system, regulating neuron survival and sprouting. The chain is Apolipoprotein E (APOE) from Pan troglodytes (Chimpanzee).